Here is a 193-residue protein sequence, read N- to C-terminus: Potassium-transporting ATPase KdpC subunit (193 aa).

The helical transmembrane segment at 14-34 (ITFTFLVLCGLVYPLIVTGIA) threads the bilayer.

It belongs to the KdpC family. In terms of assembly, the system is composed of three essential subunits: KdpA, KdpB and KdpC.

It localises to the cell membrane. In terms of biological role, part of the high-affinity ATP-driven potassium transport (or Kdp) system, which catalyzes the hydrolysis of ATP coupled with the electrogenic transport of potassium into the cytoplasm. This subunit acts as a catalytic chaperone that increases the ATP-binding affinity of the ATP-hydrolyzing subunit KdpB by the formation of a transient KdpB/KdpC/ATP ternary complex. The chain is Potassium-transporting ATPase KdpC subunit from Bacillus cereus (strain B4264).